The chain runs to 53 residues: Metallothionein (53 aa).

It belongs to the metallothionein superfamily. Type 14 family.

Its function is as follows. This protein complexes cadmium, zinc and copper. The protein is Metallothionein of Synechococcus sp.